Consider the following 234-residue polypeptide: Large ribosomal subunit protein uL1 (234 aa).

The protein belongs to the universal ribosomal protein uL1 family. As to quaternary structure, part of the 50S ribosomal subunit.

Binds directly to 23S rRNA. The L1 stalk is quite mobile in the ribosome, and is involved in E site tRNA release. In terms of biological role, protein L1 is also a translational repressor protein, it controls the translation of the L11 operon by binding to its mRNA. The polypeptide is Large ribosomal subunit protein uL1 (Yersinia pseudotuberculosis serotype O:1b (strain IP 31758)).